Here is a 103-residue protein sequence, read N- to C-terminus: MYAVIKTGGKQYRVATGEKLKVEQIPADIGQEITLDQVLSVGEGDQLKVGTPLVSGAVVKATVLAHGRHDKIKIFKMRRRKHYQKHQGHRQNYTEIRIEAITA.

It belongs to the bacterial ribosomal protein bL21 family. As to quaternary structure, part of the 50S ribosomal subunit. Contacts protein L20.

Its function is as follows. This protein binds to 23S rRNA in the presence of protein L20. The chain is Large ribosomal subunit protein bL21 from Bordetella parapertussis (strain 12822 / ATCC BAA-587 / NCTC 13253).